Reading from the N-terminus, the 261-residue chain is NADH-ubiquinone oxidoreductase chain 1 (261 aa).

Helical transmembrane passes span 2 to 22, 69 to 89, 103 to 123, 138 to 158, 172 to 192, and 224 to 244; these read LIYSIVLMLVVTLIIASITLL, FFVAMPSLAGAVCYTFWMNSI, IVYASLLSILFGLCVMLTGYF, ILMLNLEIFLGIVFLNVCFLV, IFWLIFLFFFLLSNILLVFLL, and FYLGEYFHLFFFSCLISVVFF.

Belongs to the complex I subunit 1 family.

The protein localises to the mitochondrion inner membrane. The enzyme catalyses a ubiquinone + NADH + 5 H(+)(in) = a ubiquinol + NAD(+) + 4 H(+)(out). In terms of biological role, core subunit of the mitochondrial membrane respiratory chain NADH dehydrogenase (Complex I) that is believed to belong to the minimal assembly required for catalysis. Complex I functions in the transfer of electrons from NADH to the respiratory chain. The immediate electron acceptor for the enzyme is believed to be ubiquinone. The protein is NADH-ubiquinone oxidoreductase chain 1 (ND1) of Paramecium tetraurelia.